Consider the following 126-residue polypeptide: Glycine cleavage system H protein (126 aa).

In terms of domain architecture, Lipoyl-binding spans 22–104 (VATVGITEYA…YEKAWMVKIE (83 aa)). At K63 the chain carries N6-lipoyllysine.

It belongs to the GcvH family. The glycine cleavage system is composed of four proteins: P, T, L and H. Requires (R)-lipoate as cofactor.

Its function is as follows. The glycine cleavage system catalyzes the degradation of glycine. The H protein shuttles the methylamine group of glycine from the P protein to the T protein. In terms of biological role, is also involved in protein lipoylation via its role as an octanoyl/lipoyl carrier protein intermediate. The protein is Glycine cleavage system H protein of Staphylococcus epidermidis (strain ATCC 12228 / FDA PCI 1200).